The sequence spans 845 residues: ABC transporter A family member 9 (845 aa).

7 helical membrane-spanning segments follow: residues 33–53 (CVQI…NFWV), 192–212 (AFVA…FLGG), 235–255 (IASL…MPLF), 292–312 (IYFI…FAVF), 318–338 (FAMF…SFFL), 347–367 (AASI…SILS), and 417–437 (SKII…ALYL). Positions 531–762 (VIIEGLTKHY…FGDGYSVRIN (232 aa)) constitute an ABC transporter domain. 565–572 (GANGAGKT) lines the ATP pocket.

Belongs to the ABC transporter superfamily. ABCA family.

It is found in the membrane. The chain is ABC transporter A family member 9 (abcA9) from Dictyostelium discoideum (Social amoeba).